Here is a 636-residue protein sequence, read N- to C-terminus: Fructose-1,6-bisphosphatase class 3 (636 aa).

It belongs to the FBPase class 3 family. It depends on Mn(2+) as a cofactor.

The catalysed reaction is beta-D-fructose 1,6-bisphosphate + H2O = beta-D-fructose 6-phosphate + phosphate. Its pathway is carbohydrate biosynthesis; gluconeogenesis. In Streptococcus sanguinis (strain SK36), this protein is Fructose-1,6-bisphosphatase class 3.